The sequence spans 515 residues: Protein translocase subunit SecD (515 aa).

Transmembrane regions (helical) follow at residues 5-25 (LIAKLLLIAAVIGFCIHLATP), 353-373 (KGILSVTIGMALVLLFMVAYY), 375-395 (LSGLLANMALLMNLIILMGLL), 398-418 (FGATLTLPGIAGIILTIGIAV), 450-470 (FSTILDANITTLIVAVILFQF), and 477-497 (GFAVTLSIGILASMFTAILCT).

The protein belongs to the SecD/SecF family. SecD subfamily. In terms of assembly, forms a complex with SecF. Part of the essential Sec protein translocation apparatus which comprises SecA, SecYEG and auxiliary proteins SecDF. Other proteins may also be involved.

It is found in the cell inner membrane. In terms of biological role, part of the Sec protein translocase complex. Interacts with the SecYEG preprotein conducting channel. SecDF uses the proton motive force (PMF) to complete protein translocation after the ATP-dependent function of SecA. The chain is Protein translocase subunit SecD from Desulfurispirillum indicum (strain ATCC BAA-1389 / DSM 22839 / S5).